Consider the following 433-residue polypeptide: Deoxyguanosinetriphosphate triphosphohydrolase-like protein 2 (433 aa).

The region spanning 61-248 is the HD domain; sequence RLTHSLEVAQ…METADDIAYT (188 aa).

This sequence belongs to the dGTPase family. Type 2 subfamily.

This chain is Deoxyguanosinetriphosphate triphosphohydrolase-like protein 2, found in Deinococcus radiodurans (strain ATCC 13939 / DSM 20539 / JCM 16871 / CCUG 27074 / LMG 4051 / NBRC 15346 / NCIMB 9279 / VKM B-1422 / R1).